A 305-amino-acid polypeptide reads, in one-letter code: N-acetylglucosamine-1-phosphotransferase subunit gamma (305 aa).

The N-terminal stretch at M1–A24 is a signal peptide. The MRH domain occupies G69–P171. An intrachain disulfide couples C71 to C84. N-linked (GlcNAc...) asparagine glycosylation is found at N88 and N115. Disulfide bonds link C129-C157 and C142-C169. A DMAP1-binding domain is found at V176–L279. The disordered stretch occupies residues G267 to L305. Over residues H281–R296 the composition is skewed to basic and acidic residues.

Homodimer; disulfide-linked. Hexamer of two alpha (GNPTAB), two beta (GNPTAB) and two gamma (GNPTG) subunits; disulfide-linked. The alpha and/or the beta subunits of the enzyme constitute the catalytic subunits. Post-translationally, cys-245 mediates the formation of the interchain disulfide bond for formation of the homodimer. Cys-142, Cys-157 and Cys-169 are involved in intramolecular disulfide bonds formation. In terms of tissue distribution, widely expressed.

The protein resides in the secreted. It is found in the golgi apparatus. Non-catalytic subunit of the N-acetylglucosamine-1-phosphotransferase complex, an enzyme that catalyzes the formation of mannose 6-phosphate (M6P) markers on high mannose type oligosaccharides in the Golgi apparatus. Binds and presents the high mannose glycans of the acceptor to the catalytic alpha and beta subunits (GNPTAB). Enhances the rate of N-acetylglucosamine-1-phosphate transfer to the oligosaccharides of acid hydrolase acceptors. This chain is N-acetylglucosamine-1-phosphotransferase subunit gamma (GNPTG), found in Homo sapiens (Human).